The following is an 81-amino-acid chain: MEHKVTCVLAMVLMLALSSLAQNQEETCAVIPRERINCGFPGVTAQQCKEKGCCFDDSVRGFPWCFRPLVIENQQEEECPF.

An N-terminal signal peptide occupies residues 1–21 (MEHKVTCVLAMVLMLALSSLA). Glutamine 22 carries the post-translational modification Pyrrolidone carboxylic acid. Residues 26–69 (ETCAVIPRERINCGFPGVTAQQCKEKGCCFDDSVRGFPWCFRPL) form the P-type domain. Intrachain disulfides connect cysteine 28–cysteine 54, cysteine 38–cysteine 53, and cysteine 48–cysteine 65.

Its subcellular location is the secreted. In terms of biological role, stabilizer of the mucous gel overlying the gastrointestinal mucosa that provides a physical barrier against various noxious agents. The polypeptide is Trefoil factor 1 (Tff1) (Rattus norvegicus (Rat)).